The sequence spans 287 residues: Aquaporin PIP1-1 (287 aa).

The next 2 membrane-spanning stretches (helical) occupy residues 57–77 and 92–114; these read IAEF…VMGV and IAWS…SGHI. The short motif at 115–117 is the NPA 1 element; it reads NPA. Transmembrane regions (helical) follow at residues 134 to 154, 176 to 196, and 210 to 230; these read VFYI…VKGF, GDGL…VFSA, and ILAP…TMGI. Positions 236–238 match the NPA 2 motif; it reads NPA. A helical transmembrane segment spans residues 258–278; sequence IFWVGPFIGAALAAIYHQVII.

Belongs to the MIP/aquaporin (TC 1.A.8) family. PIP (TC 1.A.8.11) subfamily. May interact with PIP1-2 to form heteromers. Highly expressed in roots, shoots and developing tassels, and at lower levels in leaves.

It localises to the cell membrane. Functionally, water channel required to facilitate the transport of water across cell membrane. Active as heteromers with PIP1-2, but not as homomers. The chain is Aquaporin PIP1-1 (PIP1-1) from Zea mays (Maize).